The chain runs to 434 residues: Nicotinate phosphoribosyltransferase (434 aa).

Position 242 is a phosphohistidine; by autocatalysis (histidine 242).

The protein belongs to the NAPRTase family. In terms of processing, transiently phosphorylated on a His residue during the reaction cycle. Phosphorylation strongly increases the affinity for substrates and increases the rate of nicotinate D-ribonucleotide production. Dephosphorylation regenerates the low-affinity form of the enzyme, leading to product release.

The catalysed reaction is nicotinate + 5-phospho-alpha-D-ribose 1-diphosphate + ATP + H2O = nicotinate beta-D-ribonucleotide + ADP + phosphate + diphosphate. It participates in cofactor biosynthesis; NAD(+) biosynthesis; nicotinate D-ribonucleotide from nicotinate: step 1/1. Functionally, catalyzes the synthesis of beta-nicotinate D-ribonucleotide from nicotinate and 5-phospho-D-ribose 1-phosphate at the expense of ATP. This is Nicotinate phosphoribosyltransferase from Rhizobium leguminosarum bv. trifolii (strain WSM2304).